A 340-amino-acid chain; its full sequence is Ketol-acid reductoisomerase (NADP(+)) (340 aa).

Positions 1–182 (MRVYYDRDCD…GGGRSGIIET (182 aa)) constitute a KARI N-terminal Rossmann domain. NADP(+) contacts are provided by residues 24 to 27 (YGSQ), arginine 48, serine 51, serine 53, and 83 to 86 (DELQ). Histidine 108 is a catalytic residue. Residue glycine 134 participates in NADP(+) binding. Residues 183–329 (NFRQECETDL…EKLRGMMPWI (147 aa)) form the KARI C-terminal knotted domain. The Mg(2+) site is built by aspartate 191, glutamate 195, glutamate 227, and glutamate 231. Substrate is bound at residue serine 252.

This sequence belongs to the ketol-acid reductoisomerase family. Requires Mg(2+) as cofactor.

It catalyses the reaction (2R)-2,3-dihydroxy-3-methylbutanoate + NADP(+) = (2S)-2-acetolactate + NADPH + H(+). The enzyme catalyses (2R,3R)-2,3-dihydroxy-3-methylpentanoate + NADP(+) = (S)-2-ethyl-2-hydroxy-3-oxobutanoate + NADPH + H(+). It functions in the pathway amino-acid biosynthesis; L-isoleucine biosynthesis; L-isoleucine from 2-oxobutanoate: step 2/4. Its pathway is amino-acid biosynthesis; L-valine biosynthesis; L-valine from pyruvate: step 2/4. Functionally, involved in the biosynthesis of branched-chain amino acids (BCAA). Catalyzes an alkyl-migration followed by a ketol-acid reduction of (S)-2-acetolactate (S2AL) to yield (R)-2,3-dihydroxy-isovalerate. In the isomerase reaction, S2AL is rearranged via a Mg-dependent methyl migration to produce 3-hydroxy-3-methyl-2-ketobutyrate (HMKB). In the reductase reaction, this 2-ketoacid undergoes a metal-dependent reduction by NADPH to yield (R)-2,3-dihydroxy-isovalerate. In Cereibacter sphaeroides (strain ATCC 17029 / ATH 2.4.9) (Rhodobacter sphaeroides), this protein is Ketol-acid reductoisomerase (NADP(+)).